Reading from the N-terminus, the 751-residue chain is Diamine oxidase [copper-containing] (751 aa).

A signal peptide spans 1–22 (MSLAFGWAAVILLLQTADTASA). 2 N-linked (GlcNAc...) asparagine glycosylation sites follow: Asn-61 and Asn-110. Asp-373 serves as the catalytic Proton acceptor. A disulfide bridge connects residues Cys-391 and Cys-417. Tyr-461 acts as the Schiff-base intermediate with substrate; via topaquinone in catalysis. The residue at position 461 (Tyr-461) is a 2',4',5'-topaquinone. Positions 510 and 512 each coordinate Cu(2+). Ca(2+) contacts are provided by Asp-519, Leu-520, and Asp-521. Asn-538 is a glycosylation site (N-linked (GlcNAc...) asparagine). The Ca(2+) site is built by Glu-562, Phe-653, Asn-656, Glu-658, Asp-664, and Leu-665. Cu(2+) is bound at residue His-675. A glycan (N-linked (GlcNAc...) asparagine) is linked at Asn-745.

Belongs to the copper/topaquinone oxidase family. Homodimer; disulfide-linked. It depends on Cu(2+) as a cofactor. The cofactor is Ca(2+). L-topaquinone serves as cofactor. In terms of processing, topaquinone (TPQ) is generated by copper-dependent autoxidation of a specific tyrosyl residue. N-glycosylated.

The protein localises to the secreted. It localises to the extracellular space. It is found in the cell membrane. The enzyme catalyses histamine + O2 + H2O = imidazole-4-acetaldehyde + H2O2 + NH4(+). The catalysed reaction is N(tau)-methylhistamine + O2 + H2O = 1-methylimidazole-4-acetaldehyde + H2O2 + NH4(+). It catalyses the reaction putrescine + O2 + H2O = 4-aminobutanal + H2O2 + NH4(+). It carries out the reaction cadaverine + O2 + H2O = 5-aminopentanal + H2O2 + NH4(+). With respect to regulation, inhibited by amiloride and amiloride analogs. Functionally, catalyzes the oxidative deamination of primary amines to the corresponding aldehydes with the concomitant production of hydrogen peroxide and ammonia. Its preferred substrates in vitro are the diamines histamine and 1-methylhistamine and it could therefore play a role in allergic and immune responses. Has a broad specificity for diamines and can also act on cadaverine and putrescine, two products of amino acid catabolism. It could also act on polyamines, like spermidine and spermine though less efficiently, and regulate various biological processes. This is Diamine oxidase [copper-containing] from Mus musculus (Mouse).